A 442-amino-acid polypeptide reads, in one-letter code: PCI domain-containing protein C1105.07c (442 aa).

The 192-residue stretch at 224–415 (VTFRYYLGRC…STLVLKKDPS (192 aa)) folds into the PCI domain.

The protein resides in the cytoplasm. It is found in the nucleus envelope. This is PCI domain-containing protein C1105.07c from Schizosaccharomyces pombe (strain 972 / ATCC 24843) (Fission yeast).